The sequence spans 102 residues: Protein C4 (102 aa).

Residues 1–27 (MRMGSLISTCLSSSKASSSARINDSST) are compositionally biased toward low complexity. Disordered stretches follow at residues 1 to 35 (MRMGSLISTCLSSSKASSSARINDSSTWSPPPGQH) and 47 to 86 (RQTSSPIWRRTETPSNGESFRSMDDLQEGDNNQPMTLTPR).

The protein belongs to the geminiviridae protein AC4/C4 family.

Pathogenicity determinant. May act as a suppressor of RNA-mediated gene silencing, also known as post-transcriptional gene silencing (PTGS), a mechanism of plant viral defense that limits the accumulation of viral RNAs. This Cynanchum acutum (Little mallow) protein is Protein C4.